Reading from the N-terminus, the 814-residue chain is Cellulase/esterase CelE (814 aa).

A signal peptide spans Met1–Val34. Positions Ser35 to Tyr354 are cellulase. The Proton donor; for cellulase activity role is filled by Glu193. The Nucleophile; for cellulase activity role is filled by Glu316. Residues Ala409–Ala479 form the Dockerin domain. Ca(2+)-binding residues include Asp415, Asn417, Asp419, Gly420, Lys421, Asp426, Asp451, Val452, Asn453, Asp455, Lys457, and Asp462. An esterase region spans residues Pro490–Trp814. Ser612 (nucleophile; for esterase activity) is an active-site residue.

This sequence in the N-terminal section; belongs to the glycosyl hydrolase 5 (cellulase A) family. In the C-terminal section; belongs to the carbohydrate esterase 2 (CE2) family.

It is found in the secreted. The enzyme catalyses Endohydrolysis of (1-&gt;4)-beta-D-glucosidic linkages in cellulose, lichenin and cereal beta-D-glucans.. It carries out the reaction Deacetylation of xylans and xylo-oligosaccharides.. Its pathway is glycan metabolism; cellulose degradation. It participates in glycan degradation; xylan degradation. Its activity is regulated as follows. Esterase activity of the CE2 module is inhibited when this domain binds to cellohexaose or beta-glucan. In terms of biological role, multifunctional enzyme involved in the degradation of plant cell wall polysaccharides. Displays endoglucanase activity against carboxymethyl cellulose (CMC) and barley beta-glucan. Also catalyzes the deacetylation of acetylated birchwood xylan and glucomannan, with a preference for the latter, and of the synthetic substrate 4-nitrophenyl acetate (4-NPAc). This Acetivibrio thermocellus (strain ATCC 27405 / DSM 1237 / JCM 9322 / NBRC 103400 / NCIMB 10682 / NRRL B-4536 / VPI 7372) (Clostridium thermocellum) protein is Cellulase/esterase CelE.